A 126-amino-acid polypeptide reads, in one-letter code: Small ribosomal subunit protein bS6 (126 aa).

The interval Val-101–Glu-126 is disordered. Basic and acidic residues predominate over residues Lys-104 to Glu-126.

It belongs to the bacterial ribosomal protein bS6 family.

Its function is as follows. Binds together with bS18 to 16S ribosomal RNA. This is Small ribosomal subunit protein bS6 from Aliivibrio salmonicida (strain LFI1238) (Vibrio salmonicida (strain LFI1238)).